The following is a 637-amino-acid chain: Glutathione hydrolase 3 (637 aa).

Residues 28–48 (LKISLLLLLILLATSGYYSFS) traverse the membrane as a helical segment. N-linked (GlcNAc...) asparagine glycosylation is present at Asn-50. Arg-147 lines the L-glutamate pocket. Asn-271, Asn-374, and Asn-398 each carry an N-linked (GlcNAc...) asparagine glycan. Thr-418 (nucleophile) is an active-site residue. Residues Thr-436, Asn-438, Glu-457, Asp-460, 488 to 489 (SS), and 509 to 510 (GG) contribute to the L-glutamate site. Asn-553 is a glycosylation site (N-linked (GlcNAc...) asparagine).

The protein belongs to the gamma-glutamyltransferase family. Expressed in roots, cotyledons, leaves, flowers and siliques.

The protein resides in the vacuole membrane. The catalysed reaction is an N-terminal (5-L-glutamyl)-[peptide] + an alpha-amino acid = 5-L-glutamyl amino acid + an N-terminal L-alpha-aminoacyl-[peptide]. It carries out the reaction glutathione + H2O = L-cysteinylglycine + L-glutamate. The enzyme catalyses an S-substituted glutathione + H2O = an S-substituted L-cysteinylglycine + L-glutamate. It participates in sulfur metabolism; glutathione metabolism. Its function is as follows. May play a role in protecting plants from some xenobiotic chemicals by degrading vacuolar glutathione conjugates into cysteine conjugates. The protein is Glutathione hydrolase 3 (GGT3) of Arabidopsis thaliana (Mouse-ear cress).